Consider the following 141-residue polypeptide: MAFTACEKQTIGKIAQVLAKSPEAYGAECLARLFVTHPGSKSYFEYKDYSAAGAKVQVHGGKVIRAVVKAAEHVDDLHSHLETLALTHGKKLLVDPQNFPMLSECIIVTLATHLTEFSPDTHCAVDKLLSAICQELSSRYR.

One can recognise a Globin domain in the interval 2–141 (AFTACEKQTI…ICQELSSRYR (140 aa)). His-59 serves as a coordination point for O2. His-88 contacts heme b.

The protein belongs to the globin family. In terms of assembly, heterotetramer of two alpha chains and two beta chains. In terms of tissue distribution, red blood cells.

Involved in oxygen transport from gills to the various peripheral tissues. The polypeptide is Hemoglobin subunit alpha (HBA) (Mustelus griseus (Spotless smooth-hound)).